We begin with the raw amino-acid sequence, 229 residues long: HTH-type transcriptional regulator HbdR (229 aa).

Residues 20-80 (EERRHQIISA…LTLKNVLDTY (61 aa)) form the HTH tetR-type domain. A DNA-binding region (H-T-H motif) is located at residues 43 to 62 (TILQIAREAKVSTGLIYQYF).

Homodimer in solution.

Its activity is regulated as follows. Activity is regulated by the effector molecules 3-hydroxybenzoyl-CoA and benzoyl-CoA, which bind to HbdR, alleviating its repression on the three target promoters and inducing the expression of the hbd genes. In terms of biological role, transcriptional regulator that controls the expression of the hbd cluster, which contains three catabolic operons and is responsible for the anaerobic degradation of 3-hydroxybenzoate. HbdR suppresses the activity of the three catabolic promoters (PhbdN, PhbdE and PhbdH) by binding to a conserved palindromic operator box. In addition, it slightly increases activity of its own promoter (PhbdR). The HbdR-mediated repression of hbd genes may play a crucial biological role in maintaining requisite hydroxybenzoate levels in the cell. The polypeptide is HTH-type transcriptional regulator HbdR (Aromatoleum sp. (strain CIB) (Azoarcus sp. (strain CIB))).